Consider the following 27-residue polypeptide: Secretin (27 aa).

The residue at position 27 (valine 27) is a Valine amide.

Belongs to the glucagon family.

Its subcellular location is the secreted. Its function is as follows. Hormone involved in different processes, such as regulation of the pH of the duodenal content, food intake and water homeostasis. Exerts its biological effects by binding to secretin receptor (SCTR), a G-protein coupled receptor expressed in the basolateral domain of several cells. Acts as a key gastrointestinal hormone by regulating the pH of the duodenal content. Secreted by S cells of the duodenum in the crypts of Lieberkuehn and regulates the pH of the duodenum by (1) inhibiting the secretion of gastric acid from the parietal cells of the stomach and (2) stimulating the production of bicarbonate (NaHCO(3)) from the ductal cells of the pancreas. Production of bicarbonate is essential to neutralize the pH and ensure no damage is done to the small intestine by the gastric acid. In addition to regulating the pH of the duodenal content, plays a central role in diet induced thermogenesis: acts as a non-sympathetic brown fat (BAT) activator mediating prandial thermogenesis, which consequentially induces satiation. Mechanistically, secretin released by the gut after a meal binds to secretin receptor (SCTR) in brown adipocytes, activating brown fat thermogenesis by stimulating lipolysis, which is sensed in the brain and promotes satiation. Also able to stimulate lipolysis in white adipocytes. Also plays an important role in cellular osmoregulation: released into the systemic circulation in response to hyperosmolality and acts at different levels in the hypothalamus, pituitary and kidney to regulate water homeostasis. Also plays a role in the central nervous system, possibly by acting as a neuropeptide hormone: required for hippocampal synaptic function and neural progenitor cells maintenance. The polypeptide is Secretin (Bos taurus (Bovine)).